Reading from the N-terminus, the 548-residue chain is Chaperonin GroEL (548 aa).

ATP contacts are provided by residues 29–32 (TLGP), lysine 50, 86–90 (DGTTT), glycine 414, 478–480 (NAA), and aspartate 494.

It belongs to the chaperonin (HSP60) family. Forms a cylinder of 14 subunits composed of two heptameric rings stacked back-to-back. Interacts with the co-chaperonin GroES.

The protein localises to the cytoplasm. It carries out the reaction ATP + H2O + a folded polypeptide = ADP + phosphate + an unfolded polypeptide.. Functionally, together with its co-chaperonin GroES, plays an essential role in assisting protein folding. The GroEL-GroES system forms a nano-cage that allows encapsulation of the non-native substrate proteins and provides a physical environment optimized to promote and accelerate protein folding. The sequence is that of Chaperonin GroEL from Alcanivorax borkumensis (strain ATCC 700651 / DSM 11573 / NCIMB 13689 / SK2).